The sequence spans 71 residues: Small ribosomal subunit protein bS21 (71 aa).

Positions 48–60 (KKAAAVKRYKKKL) are enriched in basic residues. A disordered region spans residues 48 to 71 (KKAAAVKRYKKKLQRESIRTTRMY). The span at 61–71 (QRESIRTTRMY) shows a compositional bias: basic and acidic residues.

It belongs to the bacterial ribosomal protein bS21 family.

The sequence is that of Small ribosomal subunit protein bS21 from Psychrobacter sp. (strain PRwf-1).